We begin with the raw amino-acid sequence, 178 residues long: ATP synthase subunit delta (178 aa).

It belongs to the ATPase delta chain family. As to quaternary structure, F-type ATPases have 2 components, F(1) - the catalytic core - and F(0) - the membrane proton channel. F(1) has five subunits: alpha(3), beta(3), gamma(1), delta(1), epsilon(1). F(0) has three main subunits: a(1), b(2) and c(10-14). The alpha and beta chains form an alternating ring which encloses part of the gamma chain. F(1) is attached to F(0) by a central stalk formed by the gamma and epsilon chains, while a peripheral stalk is formed by the delta and b chains.

The protein localises to the cell membrane. F(1)F(0) ATP synthase produces ATP from ADP in the presence of a proton or sodium gradient. F-type ATPases consist of two structural domains, F(1) containing the extramembraneous catalytic core and F(0) containing the membrane proton channel, linked together by a central stalk and a peripheral stalk. During catalysis, ATP synthesis in the catalytic domain of F(1) is coupled via a rotary mechanism of the central stalk subunits to proton translocation. Its function is as follows. This protein is part of the stalk that links CF(0) to CF(1). It either transmits conformational changes from CF(0) to CF(1) or is implicated in proton conduction. The polypeptide is ATP synthase subunit delta (Acetivibrio thermocellus (strain ATCC 27405 / DSM 1237 / JCM 9322 / NBRC 103400 / NCIMB 10682 / NRRL B-4536 / VPI 7372) (Clostridium thermocellum)).